The chain runs to 90 residues: Small ribosomal subunit protein bS16 (90 aa).

Belongs to the bacterial ribosomal protein bS16 family.

The sequence is that of Small ribosomal subunit protein bS16 from Streptococcus agalactiae serotype III (strain NEM316).